The following is a 305-amino-acid chain: UDP-3-O-acyl-N-acetylglucosamine deacetylase (305 aa).

Positions 79, 238, and 242 each coordinate Zn(2+). The active-site Proton donor is the His-265.

Belongs to the LpxC family. The cofactor is Zn(2+).

It carries out the reaction a UDP-3-O-[(3R)-3-hydroxyacyl]-N-acetyl-alpha-D-glucosamine + H2O = a UDP-3-O-[(3R)-3-hydroxyacyl]-alpha-D-glucosamine + acetate. Its pathway is glycolipid biosynthesis; lipid IV(A) biosynthesis; lipid IV(A) from (3R)-3-hydroxytetradecanoyl-[acyl-carrier-protein] and UDP-N-acetyl-alpha-D-glucosamine: step 2/6. Catalyzes the hydrolysis of UDP-3-O-myristoyl-N-acetylglucosamine to form UDP-3-O-myristoylglucosamine and acetate, the committed step in lipid A biosynthesis. In Haemophilus influenzae (strain PittEE), this protein is UDP-3-O-acyl-N-acetylglucosamine deacetylase.